A 338-amino-acid polypeptide reads, in one-letter code: Ferredoxin--NADP reductase (338 aa).

FAD contacts are provided by aspartate 35, glutamine 43, tyrosine 48, alanine 88, phenylalanine 122, aspartate 289, and threonine 330.

Belongs to the ferredoxin--NADP reductase type 2 family. Homodimer. The cofactor is FAD.

The catalysed reaction is 2 reduced [2Fe-2S]-[ferredoxin] + NADP(+) + H(+) = 2 oxidized [2Fe-2S]-[ferredoxin] + NADPH. This chain is Ferredoxin--NADP reductase, found in Ehrlichia canis (strain Jake).